Here is a 405-residue protein sequence, read N- to C-terminus: BRCA1-A complex subunit Abraxas 1 (405 aa).

Residues Leu7 to Tyr154 form the MPN domain. Ser48 carries the phosphoserine modification. Residues Ser208–Lys262 are a coiled coil. The interval Ala333–Phe405 is disordered. Residues Ser382, Ser383, Ser392, and Ser402 each carry the phosphoserine modification. Positions Ile386–Thr397 are enriched in acidic residues. The short motif at Ser402–Phe405 is the pSXXF motif element.

This sequence belongs to the FAM175 family. Abraxas subfamily. In terms of assembly, component of the ARISC complex, at least composed of UIMC1/RAP80, ABRAXAS1, BRCC3/BRCC36, BABAM2 and BABAM1/NBA1. Component of the BRCA1-A complex, at least composed of the BRCA1, BARD1, UIMC1/RAP80, ABRAXAS1, BRCC3/BRCC36, BABAM2 and BABAM1/NBA1. In the complex, interacts directly with UIMC1/RAP80, BRCC3/BRCC36 and BABAM2. Homodimer. Interacts directly (when phosphorylated at Ser-402) with BRCA1. The phosphorylated homodimer can interact directly with two BRCA1 chains, giving rise to a heterotetramer. Binds polyubiquitin. Phosphorylation of Ser-402 of the pSXXF motif by ATM or ATR constitutes a specific recognition motif for the BRCT domain of BRCA1.

It is found in the nucleus. Its function is as follows. Involved in DNA damage response and double-strand break (DSB) repair. Component of the BRCA1-A complex, acting as a central scaffold protein that assembles the various components of the complex and mediates the recruitment of BRCA1. The BRCA1-A complex specifically recognizes 'Lys-63'-linked ubiquitinated histones H2A and H2AX at DNA lesion sites, leading to target the BRCA1-BARD1 heterodimer to sites of DNA damage at DSBs. This complex also possesses deubiquitinase activity that specifically removes 'Lys-63'-linked ubiquitin on histones H2A and H2AX. This chain is BRCA1-A complex subunit Abraxas 1, found in Rattus norvegicus (Rat).